A 158-amino-acid chain; its full sequence is Snaclec agglucetin subunit alpha-2 (158 aa).

An N-terminal signal peptide occupies residues 1 to 23; it reads MGRFIFVSFGLLVVFLSLSGTGA. 3 cysteine pairs are disulfide-bonded: cysteine 27/cysteine 38, cysteine 55/cysteine 152, and cysteine 127/cysteine 144. The C-type lectin domain occupies 34–153; sequence YDQYCYQVIK…CIQLNPFVCK (120 aa).

The protein belongs to the snaclec family. Heterotetramer of the subunits alpha-1, alpha-2, beta-1 and beta-2; disulfide-linked. In terms of tissue distribution, expressed by the venom gland.

It is found in the secreted. Functionally, agglucetin specifically causes platelet aggregation and surface exposure of integrin alpha-IIb/beta-3 with a GPIb-(GP1BA-) dependent manner in washed platelets. It binds to human platelets in a saturable manner, and its binding is specifically blocked by anti-GP Ib mAb. It regulates endothelial cell survival and promotes angiogenesis by activating integrin alpha-v/beta-3 signaling through FAK/phosphatidylinositol 3-kinase (PI3K)/Akt pathway. This Deinagkistrodon acutus (Hundred-pace snake) protein is Snaclec agglucetin subunit alpha-2.